Reading from the N-terminus, the 334-residue chain is Leucine-rich repeat-containing protein 26 (334 aa).

The signal sequence occupies residues 1–30 (MRGSFFSRLPPQLSLLLLLLLLLSWRRVWT). Residues 31-265 (QEHIGTDPSK…QCTQSLAARD (235 aa)) are Extracellular-facing. Residues 38–75 (PSKSPVAPVCPEACSCSPGGKANCSALALPAVPAGLSW) form the LRRNT domain. Intrachain disulfides connect cysteine 47–cysteine 53 and cysteine 51–cysteine 61. LRR repeat units lie at residues 76-97 (QVRS…AFAD), 100-121 (ALLY…AFWG), 124-145 (VLQR…TFTP), 148-169 (ALSF…ILGP), and 172-194 (LLRV…LNSL). The LRRCT domain maps to 205 to 259 (NPWACSCALRPLCTWLRKHPRPTSETETLLCVSPKLQTLNLLTDFPDNAFKQCTQ). 2 disulfide bridges follow: cysteine 209/cysteine 235 and cysteine 211/cysteine 257. A helical membrane pass occupies residues 266-286 (LAVVYALGPASFLASLAICLA). At 287–334 (LGSVLTACGARRRRRRTTVRHLIRRQPDPEGPASLEDVGSPTTTAIQA) the chain is on the cytoplasmic side. The disordered stretch occupies residues 312–334 (QPDPEGPASLEDVGSPTTTAIQA).

Interacts with KCNMA1.

It localises to the cell membrane. It is found in the cytoplasm. The protein localises to the cytoskeleton. In terms of biological role, auxiliary protein of the large-conductance, voltage and calcium-activated potassium channel (BK alpha). Required for the conversion of BK alpha channels from a high-voltage to a low-voltage activated channel type in non-excitable cells. These are characterized by negative membrane voltages and constant low levels of calcium. In Rattus norvegicus (Rat), this protein is Leucine-rich repeat-containing protein 26 (Lrrc26).